Reading from the N-terminus, the 864-residue chain is Leucine--tRNA ligase (864 aa).

Residues 42 to 52 (PYPSGKLHMGH) carry the 'HIGH' region motif. A 'KMSKS' region motif is present at residues 624–628 (KMSKS). K627 is an ATP binding site.

This sequence belongs to the class-I aminoacyl-tRNA synthetase family.

It localises to the cytoplasm. It catalyses the reaction tRNA(Leu) + L-leucine + ATP = L-leucyl-tRNA(Leu) + AMP + diphosphate. The chain is Leucine--tRNA ligase from Burkholderia mallei (strain ATCC 23344).